A 497-amino-acid polypeptide reads, in one-letter code: MAWNTNLRGRLPITCLILQVTMVVLFGVFVRYDIQADAHWWLEKKRKNISSDVENEFYYRYPSFEDVHAMVFVGFGFLMTYLQRYGFSAVGFNFLLAAFGIQWALLMQGWFHFFEEGHILLSVENLIQADFCVASTCVAFGAVLGKISPMQLLIMTFFQVTLFTVNEFILLNLIEAKDAGGSMTIHTFGAYFGLTVTWILYRKNLEQSKQRQSSVYHSDLFAMIGTLFLWIYWPSFNSASSFHGDTQHRAALNTYLSLAASVLTTVAVSSVIHKKGKLDMVHIQNATLAGGVGVGTAAEMMLTPYGALIVGFFCGILSTLGFAYLSPFLESRLRIQDTCGIHNLHGIPGIIGGIVGAVTAAYSSPDVYGEPGIVHSFGFGGYKADWTKRMQGRSQIFGLLLSLAMALVGGIIVGFILKLPFWGQASDENCFEDAIYWEVPEEVNTVYIPEDLAHKHSTSLVPAIPLVLSTPSASIVPPVPPTPPASLATVTSSSLVH.

The Cytoplasmic segment spans residues 1-9 (MAWNTNLRG). The helical transmembrane segment at 10-30 (RLPITCLILQVTMVVLFGVFV) threads the bilayer. Over 31 to 61 (RYDIQADAHWWLEKKRKNISSDVENEFYYRY) the chain is Extracellular. The N-linked (GlcNAc...) asparagine glycan is linked to N48. The helical transmembrane segment at 62–82 (PSFEDVHAMVFVGFGFLMTYL) threads the bilayer. The Cytoplasmic portion of the chain corresponds to 83–93 (QRYGFSAVGFN). The helical transmembrane segment at 94-114 (FLLAAFGIQWALLMQGWFHFF) threads the bilayer. Over 115–125 (EEGHILLSVEN) the chain is Extracellular. A helical membrane pass occupies residues 126–145 (LIQADFCVASTCVAFGAVLG). Residues 146-151 (KISPMQ) are Cytoplasmic-facing. A helical membrane pass occupies residues 152-174 (LLIMTFFQVTLFTVNEFILLNLI). Topologically, residues 175 to 179 (EAKDA) are extracellular. Residues 180–200 (GGSMTIHTFGAYFGLTVTWIL) form a helical membrane-spanning segment. The Cytoplasmic portion of the chain corresponds to 201–219 (YRKNLEQSKQRQSSVYHSD). A helical transmembrane segment spans residues 220-240 (LFAMIGTLFLWIYWPSFNSAS). The Extracellular portion of the chain corresponds to 241-251 (SFHGDTQHRAA). The helical transmembrane segment at 252-272 (LNTYLSLAASVLTTVAVSSVI) threads the bilayer. Residues 273-282 (HKKGKLDMVH) lie on the Cytoplasmic side of the membrane. The helical transmembrane segment at 283 to 303 (IQNATLAGGVGVGTAAEMMLT) threads the bilayer. P304 is a topological domain (extracellular). The helical transmembrane segment at 305–325 (YGALIVGFFCGILSTLGFAYL) threads the bilayer. The Cytoplasmic portion of the chain corresponds to 326–340 (SPFLESRLRIQDTCG). Residues 341–361 (IHNLHGIPGIIGGIVGAVTAA) traverse the membrane as a helical segment. Residues 362–395 (YSSPDVYGEPGIVHSFGFGGYKADWTKRMQGRSQ) lie on the Extracellular side of the membrane. The chain crosses the membrane as a helical span at residues 396–416 (IFGLLLSLAMALVGGIIVGFI). Over 417–497 (LKLPFWGQAS…ATVTSSSLVH (81 aa)) the chain is Cytoplasmic.

Belongs to the ammonium transporter (TC 2.A.49) family. Rh subfamily. In terms of assembly, homotrimer. Post-translationally, N-glycosylated. Expressed by connecting tubule cells and intercalated cells of the collecting duct in kidney (at protein level).

It localises to the cell membrane. Its subcellular location is the apical cell membrane. The catalysed reaction is NH4(+)(in) = NH4(+)(out). The enzyme catalyses methylamine(out) = methylamine(in). It carries out the reaction CO2(out) = CO2(in). In terms of biological role, ammonium transporter involved in the maintenance of acid-base homeostasis. Transports ammonium and its related derivative methylammonium across the plasma membrane of epithelial cells likely contributing to renal transepithelial ammonia transport and ammonia metabolism. Postulated to primarily mediate an electroneutral bidirectional transport of NH3 ammonia species according to a mechanism that implies interaction of an NH4(+) ion with acidic residues of the pore entry followed by dissociation of NH4(+) into NH3 and H(+). As a result NH3 transits through the central pore and is protonated on the extracellular side reforming NH4(+). May act as a CO2 channel providing for renal acid secretion. The polypeptide is Ammonium transporter Rh type C (Rhcg) (Rattus norvegicus (Rat)).